Reading from the N-terminus, the 277-residue chain is Proteasome subunit beta type-7 (277 aa).

A propeptide spans 1 to 43 (MAAVSVYERPVGGFSFDNCRRNAVLEADFAKKGYKLPTARKTG) (removed in mature form). The active-site Nucleophile is T44.

It belongs to the peptidase T1B family. The 26S proteasome consists of a 20S proteasome core and two 19S regulatory subunits. The 20S proteasome core is a barrel-shaped complex made of 28 subunits that are arranged in four stacked rings. The two outer rings are each formed by seven alpha subunits, and the two inner rings are formed by seven beta subunits. The proteolytic activity is exerted by three beta-subunits PSMB5, PSMB6 and PSMB7.

It localises to the cytoplasm. The protein localises to the nucleus. The enzyme catalyses Cleavage of peptide bonds with very broad specificity.. Its function is as follows. Component of the 20S core proteasome complex involved in the proteolytic degradation of most intracellular proteins. This complex plays numerous essential roles within the cell by associating with different regulatory particles. Associated with two 19S regulatory particles, forms the 26S proteasome and thus participates in the ATP-dependent degradation of ubiquitinated proteins. The 26S proteasome plays a key role in the maintenance of protein homeostasis by removing misfolded or damaged proteins that could impair cellular functions, and by removing proteins whose functions are no longer required. Associated with the PA200 or PA28, the 20S proteasome mediates ubiquitin-independent protein degradation. This type of proteolysis is required in several pathways including spermatogenesis (20S-PA200 complex) or generation of a subset of MHC class I-presented antigenic peptides (20S-PA28 complex). Within the 20S core complex, PSMB7 displays a trypsin-like activity. The polypeptide is Proteasome subunit beta type-7 (PSMB7) (Bos taurus (Bovine)).